The primary structure comprises 25 residues: Caerin-1.3 (25 aa).

A Leucine amide modification is found at leucine 25.

Expressed by the skin parotoid and/or rostral glands.

It is found in the secreted. In terms of biological role, antibacterial peptide, that adopts an alpha helical conformation which can disrupt bacterial membranes. Each caerin displays a different antimicrobial specificity. The sequence is that of Caerin-1.3 from Ranoidea caerulea (Green tree frog).